Consider the following 827-residue polypeptide: Villin-1 (827 aa).

Positions 1 to 126 are necessary for homodimerization; that stretch reads MTKLNAQVKG…IRKGGVASGM (126 aa). The core stretch occupies residues 1–734; it reads MTKLNAQVKG…YDDLKAELGN (734 aa). Residues 27 to 76 form a Gelsolin-like 1 repeat; the sequence is MQMVPVPSSTFGSFFDGDCYVVLAIHKTSSTLSYDIHYWIGQDSSQDEQG. 2 LPA/PIP2-binding site regions span residues 112–119 and 138–146; these read KQGLVIRK and RLLHVKGKR. 2 Gelsolin-like repeats span residues 148–188 and 265–309; these read VLAG…MERL and LVVR…QERS. Ser-366 carries the post-translational modification Phosphoserine. 3 Gelsolin-like repeats span residues 407–457, 528–568, and 631–672; these read DLEL…DEIA, TKAF…DERE, and FLAT…EEKK. A phosphoserine mark is found at Ser-735 and Ser-776. A headpiece region spans residues 735 to 827; it reads SGDWSQIADE…QNIKKEKGLF (93 aa). The region spanning 761-827 is the HP domain; the sequence is SGPLPTFPLE…QNIKKEKGLF (67 aa). The tract at residues 816-824 is LPA/PIP2-binding site 3; sequence KQQNIKKEK.

Belongs to the villin/gelsolin family. As to quaternary structure, monomer. Homodimer; homodimerization is necessary for actin-bundling. Associates with F-actin; phosphorylation at tyrosine residues decreases the association with F-actin. Interacts (phosphorylated at C-terminus tyrosine phosphorylation sites) with PLCG1 (via the SH2 domains). Interacts (phosphorylated form) with PLCG1; the interaction is enhanced by hepatocyte growth factor (HGF). Post-translationally, phosphorylated on tyrosine residues by SRC. The unphosphorylated form increases the initial rate of actin-nucleating activity, whereas the tyrosine phosphorylated form inhibits actin-nucleating activity, enhances actin-bundling activity and enhances actin-severing activity by reducing high Ca(2+) requirements. The tyrosine phosphorylated form does not regulate actin-capping activity. Tyrosine phosphorylation is essential for cell migration: tyrosine phosphorylation sites in the N-terminus half regulate actin reorganization and cell morphology, whereas tyrosine phosphorylation sites in the C-terminus half regulate cell migration via interaction with PLCG1. Tyrosine phosphorylation is induced by epidermal growth factor (EGF) and stimulates cell migration. In terms of tissue distribution, expressed in small intestin, colon, kidney and enterocytes (at protein level).

It localises to the cytoplasm. The protein resides in the cytoskeleton. The protein localises to the cell projection. It is found in the microvillus. Its subcellular location is the lamellipodium. It localises to the ruffle. The protein resides in the filopodium tip. The protein localises to the filopodium. Epithelial cell-specific Ca(2+)-regulated actin-modifying protein that modulates the reorganization of microvillar actin filaments. Plays a role in the actin nucleation, actin filament bundle assembly, actin filament capping and severing. Binds phosphatidylinositol 4,5-bisphosphate (PIP2) and lysophosphatidic acid (LPA); binds LPA with higher affinity than PIP2. Binding to LPA increases its phosphorylation by SRC and inhibits all actin-modifying activities. Binding to PIP2 inhibits actin-capping and -severing activities but enhances actin-bundling activity. Regulates the intestinal epithelial cell morphology, cell invasion, cell migration and apoptosis. Protects against apoptosis induced by dextran sodium sulfate (DSS) in the gastrointestinal epithelium. Appears to regulate cell death by maintaining mitochondrial integrity. Enhances hepatocyte growth factor (HGF)-induced epithelial cell motility, chemotaxis and wound repair. Upon S.flexneri cell infection, its actin-severing activity enhances actin-based motility of the bacteria and plays a role during the dissemination. The protein is Villin-1 (Vil1) of Mus musculus (Mouse).